The chain runs to 82 residues: Short neurotoxin OKI-10 (82 aa).

The N-terminal stretch at 1-20 (KTLLLTLVVVTIVCLDLGYT) is a signal peptide. 4 disulfides stabilise this stretch: Cys-23/Cys-44, Cys-37/Cys-61, Cys-63/Cys-74, and Cys-75/Cys-80.

This sequence belongs to the three-finger toxin family. Short-chain subfamily. Type I alpha-neurotoxin sub-subfamily. Expressed by the venom gland.

Its subcellular location is the secreted. Binds to muscle nicotinic acetylcholine receptor (nAChR) and inhibit acetylcholine from binding to the receptor, thereby impairing neuromuscular transmission. This is Short neurotoxin OKI-10 from Laticauda laticaudata (Blue-ringed sea krait).